A 225-amino-acid chain; its full sequence is 7-cyano-7-deazaguanine synthase (225 aa).

Residue 10 to 20 coordinates ATP; sequence FSGGQDSTTLA. Cys-190, Cys-205, Cys-208, and Cys-211 together coordinate Zn(2+).

This sequence belongs to the QueC family. The cofactor is Zn(2+).

It catalyses the reaction 7-carboxy-7-deazaguanine + NH4(+) + ATP = 7-cyano-7-deazaguanine + ADP + phosphate + H2O + H(+). The protein operates within purine metabolism; 7-cyano-7-deazaguanine biosynthesis. Its function is as follows. Catalyzes the ATP-dependent conversion of 7-carboxy-7-deazaguanine (CDG) to 7-cyano-7-deazaguanine (preQ(0)). This is 7-cyano-7-deazaguanine synthase from Helicobacter acinonychis (strain Sheeba).